Here is a 67-residue protein sequence, read N- to C-terminus: Putative selenoprotein YdfZ (67 aa).

Residue cysteine 52 is modified to S-selanylcysteine.

In Escherichia coli O6:H1 (strain CFT073 / ATCC 700928 / UPEC), this protein is Putative selenoprotein YdfZ (ydfZ).